Here is a 1836-residue protein sequence, read N- to C-terminus: MALRGPMKRSHLRQVSAPSVDSLSVPQSQSPEALYNDERSHQDVHATPDERTIRLSSGSLERRQCSLWVHDETFSREEILFNQAAFSDLNVNVGDVIEILPVRSPGDSIHSLKSDLGARSLRDSYLESGSAHLPDPMSKFKTPLQSRCLFVVKPLPQEIKARHPKLEISVTHSVANIFGFKNRTLVNISVVDRGQCSASHVDIAFRDQFLVRSDMWRLVMSELADKIIYKGQKIVFMGSIKATVKNIFIRGKKVLSGYFSPHTIPVFRSESAKYVLFIQMSREMWDFDSEGTGDILFSRVINGFLPELFKRWANSDAKHLVTIVLFTRVEYDSSALGGPLPLSSESLRCISSPNHAPTRDFYRVVVNDMASGHWTTILDELKKDFRTFLRDVSILKMDRPDTPTVDGVKVAPKNKPAIIAGRPSTALRGNILEAIHLASAHLAYDHIDRDLVHTGTSIIVITPGSGVFEVSYESLSSTSEALADRGIAIDLVCLSPMPLHSVPLFKYKAPVERSGSSSFGDFHSTGYSPEMRQSFSFASRTPHLSPKSTMQGSFPGMTRKEHLSARSDEWNYGIPHWLDISYWNPETYREARRIAKKDPNAPIPFTVTKQSKLFVPRVRMYEIQMMGVMESEQSDISIPYLLEGQGVSRPSNAGLGLGPSGLSSRASFRRNSSYKAQLSDSLRPEPFLQNITNPRDVMLAKAKKTPNQVIAWMDQYDEAVFQPFAKRRQQRKASRPKRPSEPEVQVSNAHERLSARSVLRLREHETNSNSGDRSYPTRTIPRVSETLSVPQGPAPSKASTSPKKPALKAPSAARTPRMSRTISFALLGFGATPPRAQASTEVNVEHARAQPTSGQKKPSVGFMDTRSVESFSGSDSASISTVIDTSLRPASPHPAPQTSAMTPTRPISIKVPPRQPSEDTEPVDRTVLPESYSTTSTAIPFTGDGRRDSRTKNGPSFELTVSGGSRESSIKSPQNKALAPWVRSINPCNTSRDVLRDTSWFGRWQHAYPRPPHVAVVKWKSLKSPAILPLTTEEFPTAQELGSDYLQTPYRVFPNDDPEGVEVPKTRGILLREMISLRLSHGFQIVIGKHVAEVSGQPALETLNVFDTRSLERDGATVFLSKGNTIHRLICVDGGEIEVTRFTHRTSSTLAAGKRDGFSLYTPAMRTILSTEYELKNIKLDPTAEDYNWNYADNYVAGHRDYLFNPAQQLQFWRVRYVLIPMPLQVNNRRHLQSFNEDNEEEIHLLGINQLTHIWQRHRYVPPEEKRFESSNEKKDQNPLNIMYQTRNPSEVVAAELDRILLSDPGLDNSPAQLLPESELLERSSISLSSLAQIIQGEKGVRMMDRRWHWRLHYNCFIGFEFTTWLLQNFRDIDSREEAVQFGNELMKHGLFQHVEKRHNFRDGNYFYQISSEYRVARPESRGSWFPQKKPDKQVPSTGASENPRDSAVNGHSRSESVETPATPSKSKNKATIMLSKMMKYDVDPRKRSNRPEVIDLHYDRLHNPDNCFHIELSWMNTTPKLIEDAVLSWAATAEKFGLKLVQVPIAEGCAISRTQPFRKPYRVSLAVPPPPGPVPTVFNTATFSQLGSSDRHYYHKALLRKFDFVLDFEARSAFPADVEVSYSWGTPDYQYPQYIHRSGSLLVQITDEGDFLFLANRLVSTRLAAATREGSRYERMDRPEHLRARASTHDPLDRISPRLSPLVRPLHDIGSPISPQGQPSIDLAQLYRAPEHILNSFEEFCNDAARLEQFYSVSHARPASTKVGPAPTTVMDSSIPTLELPASVVSHHIQSPALTTRASVDGSMPSVDAMTRARNDSLSYKGSPKSGSLRPLNIN.

Residues 1–12 are compositionally biased toward basic residues; that stretch reads MALRGPMKRSHL. 3 disordered regions span residues 1–51, 727–816, and 886–975; these read MALR…PDER, RRQQ…ARTP, and SLRP…SPQN. Positions 16–31 are enriched in polar residues; that stretch reads SAPSVDSLSVPQSQSP. Positions 36 to 51 are enriched in basic and acidic residues; the sequence is NDERSHQDVHATPDER. Positions 727–737 are enriched in basic residues; the sequence is RRQQRKASRPK. The span at 749-766 shows a compositional bias: basic and acidic residues; that stretch reads AHERLSARSVLRLREHET. Residues 794-813 are compositionally biased toward low complexity; sequence APSKASTSPKKPALKAPSAA. Over residues 962–975 the composition is skewed to polar residues; sequence SGGSRESSIKSPQN. Residues 1337 to 1412 form the DEP domain; that stretch reads GEKGVRMMDR…DGNYFYQISS (76 aa). Disordered stretches follow at residues 1421-1471 and 1814-1836; these read SRGS…KNKA and ARNDSLSYKGSPKSGSLRPLNIN.

The protein belongs to the IML1 family.

It is found in the vacuole membrane. The chain is Vacuolar membrane-associated protein iml1 (iml1) from Aspergillus fumigatus (strain ATCC MYA-4609 / CBS 101355 / FGSC A1100 / Af293) (Neosartorya fumigata).